The sequence spans 117 residues: Immunoglobulin heavy variable 1-84 (117 aa).

Positions 1–19 (MGWSWIFLFLLSGTAGVHC) are cleaved as a signal peptide. Positions 20–49 (QIQLQQSGPELVKPGASVKISCKASGYTFT) are framework-1. The Ig-like domain occupies 31–117 (VKPGASVKIS…EDSAVYFCAR (87 aa)). Cys-41 and Cys-115 are disulfide-bonded. A complementarity-determining-1 region spans residues 50–54 (DYYIN). The framework-2 stretch occupies residues 55–68 (WVKQRPGQGLEWIG). Positions 69–85 (WIYPGSGNTKYNEKFKG) are complementarity-determining-2. The framework-3 stretch occupies residues 86–117 (KATLTVDTSSSTAYMQLSSLTSEDSAVYFCAR).

The polypeptide is Immunoglobulin heavy variable 1-84 (Mus musculus (Mouse)).